A 171-amino-acid chain; its full sequence is Shikimate kinase (171 aa).

ATP is bound at residue 11–16 (GTGKTT). T15 serves as a coordination point for Mg(2+). D33, R57, and G79 together coordinate substrate. Residue R117 participates in ATP binding. A substrate-binding site is contributed by R136.

The protein belongs to the shikimate kinase family. As to quaternary structure, monomer. Requires Mg(2+) as cofactor.

Its subcellular location is the cytoplasm. The catalysed reaction is shikimate + ATP = 3-phosphoshikimate + ADP + H(+). Its pathway is metabolic intermediate biosynthesis; chorismate biosynthesis; chorismate from D-erythrose 4-phosphate and phosphoenolpyruvate: step 5/7. In terms of biological role, catalyzes the specific phosphorylation of the 3-hydroxyl group of shikimic acid using ATP as a cosubstrate. This is Shikimate kinase from Caldanaerobacter subterraneus subsp. tengcongensis (strain DSM 15242 / JCM 11007 / NBRC 100824 / MB4) (Thermoanaerobacter tengcongensis).